The following is a 436-amino-acid chain: Testis-expressed protein 44 (436 aa).

Composition is skewed to acidic residues over residues 1 to 10 and 45 to 54; these read MTTEPLEDPE and LPDEVPPEDI. 2 disordered regions span residues 1-142 and 165-307; these read MTTE…LTSL and AENN…SLYG. 2 stretches are compositionally biased toward polar residues: residues 81 to 103 and 167 to 195; these read ASMQ…TDTS and NNRT…TVSE. Over residues 234–247 the composition is skewed to basic and acidic residues; it reads EPTKSADQEAEDFK. The segment covering 273–289 has biased composition (pro residues); it reads QAPPSPNSPADSPPPSP. At S375 the chain carries Phosphoserine.

The protein localises to the cytoplasm. This Rattus norvegicus (Rat) protein is Testis-expressed protein 44 (Tex44).